A 636-amino-acid chain; its full sequence is Chaperone protein DnaK (636 aa).

Position 198 is a phosphothreonine; by autocatalysis (T198). Over residues 602–613 (QPAGEEQAGAAA) the composition is skewed to low complexity. The tract at residues 602-636 (QPAGEEQAGAAAHEGEAKGEKVVDADFEEVKEDKK) is disordered. The span at 614 to 625 (HEGEAKGEKVVD) shows a compositional bias: basic and acidic residues. Residues 626–636 (ADFEEVKEDKK) show a composition bias toward acidic residues.

This sequence belongs to the heat shock protein 70 family.

Its function is as follows. Acts as a chaperone. This is Chaperone protein DnaK from Geotalea daltonii (strain DSM 22248 / JCM 15807 / FRC-32) (Geobacter daltonii).